We begin with the raw amino-acid sequence, 387 residues long: Eukaryotic translation initiation factor 3 subunit M (387 aa).

The region spanning 181 to 340 is the PCI domain; it reads LSSKVMIELL…RKVHISSTMH (160 aa).

This sequence belongs to the eIF-3 subunit M family. In terms of assembly, component of the eukaryotic translation initiation factor 3 (eIF-3) complex. The eIF-3 complex interacts with pix.

The protein localises to the cytoplasm. Its subcellular location is the golgi apparatus. In terms of biological role, component of the eukaryotic translation initiation factor 3 (eIF-3) complex, which is involved in protein synthesis of a specialized repertoire of mRNAs and, together with other initiation factors, stimulates binding of mRNA and methionyl-tRNAi to the 40S ribosome. The eIF-3 complex specifically targets and initiates translation of a subset of mRNAs involved in cell proliferation. This chain is Eukaryotic translation initiation factor 3 subunit M, found in Drosophila mojavensis (Fruit fly).